The chain runs to 177 residues: Adenine phosphoribosyltransferase (177 aa).

It belongs to the purine/pyrimidine phosphoribosyltransferase family. In terms of assembly, homodimer.

It localises to the cytoplasm. It carries out the reaction AMP + diphosphate = 5-phospho-alpha-D-ribose 1-diphosphate + adenine. The protein operates within purine metabolism; AMP biosynthesis via salvage pathway; AMP from adenine: step 1/1. In terms of biological role, catalyzes a salvage reaction resulting in the formation of AMP, that is energically less costly than de novo synthesis. The polypeptide is Adenine phosphoribosyltransferase (Leuconostoc citreum (strain KM20)).